A 155-amino-acid polypeptide reads, in one-letter code: DNA gyrase inhibitor (155 aa).

The protein belongs to the DNA gyrase inhibitor family. In terms of assembly, interacts with DNA gyrase.

The protein localises to the cytoplasm. Its function is as follows. Inhibits the supercoiling activity of DNA gyrase. Acts by inhibiting DNA gyrase at an early step, prior to (or at the step of) binding of DNA by the gyrase. It protects cells against toxins that target DNA gyrase, by inhibiting activity of these toxins and reducing the formation of lethal double-strand breaks in the cell. This is DNA gyrase inhibitor from Salmonella arizonae (strain ATCC BAA-731 / CDC346-86 / RSK2980).